Reading from the N-terminus, the 326-residue chain is Protease HtpX homolog (326 aa).

Transmembrane regions (helical) follow at residues 10 to 30 and 41 to 61; these read LNMA…ALAV and VGLM…QWLF. A Zn(2+)-binding site is contributed by His-147. Glu-148 is a catalytic residue. Zn(2+) is bound at residue His-151. 2 helical membrane passes run 159–179 and 197–217; these read LLMA…WIFW and LLFL…LLVL. Residue Glu-224 coordinates Zn(2+).

The protein belongs to the peptidase M48B family. It depends on Zn(2+) as a cofactor.

It localises to the cell membrane. The polypeptide is Protease HtpX homolog (Saccharolobus islandicus (strain Y.N.15.51 / Yellowstone #2) (Sulfolobus islandicus)).